The primary structure comprises 182 residues: Dual-action ribosomal maturation protein DarP (182 aa).

Belongs to the DarP family.

Its subcellular location is the cytoplasm. In terms of biological role, member of a network of 50S ribosomal subunit biogenesis factors which assembles along the 30S-50S interface, preventing incorrect 23S rRNA structures from forming. Promotes peptidyl transferase center (PTC) maturation. The sequence is that of Dual-action ribosomal maturation protein DarP from Yersinia pestis.